We begin with the raw amino-acid sequence, 872 residues long: Alanine--tRNA ligase (872 aa).

The Zn(2+) site is built by His-567, His-571, Cys-669, and His-673.

It belongs to the class-II aminoacyl-tRNA synthetase family. Requires Zn(2+) as cofactor.

The protein localises to the cytoplasm. It carries out the reaction tRNA(Ala) + L-alanine + ATP = L-alanyl-tRNA(Ala) + AMP + diphosphate. Functionally, catalyzes the attachment of alanine to tRNA(Ala) in a two-step reaction: alanine is first activated by ATP to form Ala-AMP and then transferred to the acceptor end of tRNA(Ala). Also edits incorrectly charged Ser-tRNA(Ala) and Gly-tRNA(Ala) via its editing domain. This chain is Alanine--tRNA ligase, found in Streptococcus agalactiae serotype III (strain NEM316).